The primary structure comprises 136 residues: Large ribosomal subunit protein uL16 (136 aa).

It belongs to the universal ribosomal protein uL16 family. In terms of assembly, part of the 50S ribosomal subunit.

Binds 23S rRNA and is also seen to make contacts with the A and possibly P site tRNAs. The protein is Large ribosomal subunit protein uL16 of Mesomycoplasma hyopneumoniae (strain 232) (Mycoplasma hyopneumoniae).